The primary structure comprises 473 residues: MSNKVLVKWAVILVALFASVYLLYPVYKWYSLSNEDRAKLEASGDRPKNILNLGLDLRGGSSLLLELDVTKLPDNTPAARNDAVSRAIEIIRNRIDQYGVAETPITRQGEKWISVQLPGIANPAQAEALIGKTAMLEFRIVKPQTSALDKAAAKIEDTEEPWDEDGNLIPSLAKLLPADTIVLKNKEGGFSFLEKEVKVTGADLENAQVNVGGDYGYPEVSFTFSAEGAKKFGSLTGSNIGKQLAIVLDNTVQSAPSIQSRITRDGRISGRFTMDEARRLAITLRAGALPAPVKIIEKRTIGPSLGEDSIKSGVRASLYGIVIILILMAIYYKSGGIISNIALILNLVFLLAAMAAFNATLTMPGIAGIILSLAMAIDANVLILERMREEKLRGRSLYEMIDLGYTKAWSAIFDSNFTSWIVALFLFQFGSGPVKGFAVTLTLGLLIGVFTSVFVTRAIYDLLLTANPKDISL.

The next 6 membrane-spanning stretches (helical) occupy residues 5-25 (VLVK…LLYP), 316-336 (ASLY…KSGG), 337-357 (IISN…MAAF), 364-384 (PGIA…VLIL), 409-429 (WSAI…LFQF), and 436-456 (GFAV…VFVT).

This sequence belongs to the SecD/SecF family. SecD subfamily. As to quaternary structure, forms a complex with SecF. Part of the essential Sec protein translocation apparatus which comprises SecA, SecYEG and auxiliary proteins SecDF. Other proteins may also be involved.

It is found in the cell inner membrane. Functionally, part of the Sec protein translocase complex. Interacts with the SecYEG preprotein conducting channel. SecDF uses the proton motive force (PMF) to complete protein translocation after the ATP-dependent function of SecA. The sequence is that of Protein translocase subunit SecD from Elusimicrobium minutum (strain Pei191).